The following is a 399-amino-acid chain: Insertion element IS900 uncharacterized 42 kDa protein (399 aa).

This sequence belongs to the transposase IS1111A/IS1328/IS1533 family.

This chain is Insertion element IS900 uncharacterized 42 kDa protein, found in Mycobacterium paratuberculosis.